We begin with the raw amino-acid sequence, 287 residues long: Pantothenate synthetase (287 aa).

30–37 contacts ATP; the sequence is MGNLHSGH. Histidine 37 acts as the Proton donor in catalysis. Glutamine 61 serves as a coordination point for (R)-pantoate. Position 61 (glutamine 61) interacts with beta-alanine. ATP is bound at residue 149–152; the sequence is GEKD. Glutamine 155 lines the (R)-pantoate pocket. ATP-binding positions include valine 178 and 186–189; that span reads LSSR.

This sequence belongs to the pantothenate synthetase family. In terms of assembly, homodimer.

It is found in the cytoplasm. The catalysed reaction is (R)-pantoate + beta-alanine + ATP = (R)-pantothenate + AMP + diphosphate + H(+). Its pathway is cofactor biosynthesis; (R)-pantothenate biosynthesis; (R)-pantothenate from (R)-pantoate and beta-alanine: step 1/1. Catalyzes the condensation of pantoate with beta-alanine in an ATP-dependent reaction via a pantoyl-adenylate intermediate. The sequence is that of Pantothenate synthetase from Pseudomonas putida (strain ATCC 47054 / DSM 6125 / CFBP 8728 / NCIMB 11950 / KT2440).